Reading from the N-terminus, the 374-residue chain is Fasciclin-like arabinogalactan protein CTB11 (374 aa).

An N-terminal signal peptide occupies residues 1 to 18 (MHFPALAVAGCLLSRATA). FAS1 domains are found at residues 19 to 171 (QSLD…DANM) and 173 to 302 (LPHN…DGAL). N-linked (GlcNAc...) asparagine glycans are attached at residues Asn-52, Asn-72, Asn-120, Asn-132, and Asn-176. The chain crosses the membrane as a helical span at residues 328–348 (ILASHQLTLLAVLAMALVSIL).

It belongs to the fasciclin-like AGP family.

The protein resides in the membrane. Its pathway is mycotoxin biosynthesis. Functionally, fasciclin-like arabinogalactan protein; part of the gene cluster that mediates the biosynthesis of cercosporin, a light-activated, non-host-selective toxin. The perylenequinone chromophore of cercosporin absorbs light energy to attain an electronically-activated triplet state and produces active oxygen species such as the hydroxyl radical, superoxide, hydrogen peroxide or singlet oxygen upon reaction with oxygen molecules. These reactive oxygen species cause damage to various cellular components including lipids, proteins and nucleic acids. The first step of cercosporin biosynthesis is performed by the polyketide synthase CTB1 which catalyzes the formation of nor-toralactone. The starter unit acyltransferase (SAT) domain of CTB1 initiates polyketide extension by the selective utilization of acetyl-CoA, which is elongated to the heptaketide in the beta-ketoacyl synthase (KS) domain by successive condensations with six malonyl units introduced by the malonyl acyltransferase (MAT) domain. The product template (PT) domain catalyzes C4-C9 and C2-C11 aldol cyclizations and dehydrations to a trihydroxynaphthalene, which is thought to be delivered to the thioesterase (TE) domain for product release. The bifunctional enzyme CTB3 then methylates nor-toralactone to toralactone before conducting an unusual oxidative aromatic ring opening. The O-methyltransferase CTB2 further methylates the nascent OH-6 of the CBT3 product, blocking further oxidation at this site before the reductase CTB6 reduces the 2-oxopropyl ketone at position C7, giving naphthalene. The FAD-dependent monooxygenase CTB5 in concert with the multicopper oxidase CTB12 are responsible for homodimerization of naphthalene with CTB7 installing the dioxepine moiety, finally producing cercosporin. The fasciclin domain-containing protein CTB11 might act with CTB5 and CTB12 whereas the roles of CTB9 and CTB10 have still to be elucidated. This Cercospora beticola (Sugarbeet leaf spot fungus) protein is Fasciclin-like arabinogalactan protein CTB11.